Consider the following 324-residue polypeptide: Probable pectinesterase A (324 aa).

The first 19 residues, 1–19, serve as a signal peptide directing secretion; the sequence is MHLPSLVLGLLGLGLTASA. The N-linked (GlcNAc...) asparagine glycan is linked to Asn-27. Gln-142 is a substrate binding site. The active-site Proton donor is Asp-165. The active-site Nucleophile is the Asp-186. N-linked (GlcNAc...) asparagine glycosylation occurs at Asn-191. Substrate-binding residues include Arg-246 and Trp-248.

This sequence belongs to the pectinesterase family.

Its subcellular location is the secreted. It carries out the reaction [(1-&gt;4)-alpha-D-galacturonosyl methyl ester](n) + n H2O = [(1-&gt;4)-alpha-D-galacturonosyl](n) + n methanol + n H(+). The protein operates within glycan metabolism; pectin degradation; 2-dehydro-3-deoxy-D-gluconate from pectin: step 1/5. Involved in maceration and soft-rotting of plant tissue. The polypeptide is Probable pectinesterase A (pmeA) (Neosartorya fischeri (strain ATCC 1020 / DSM 3700 / CBS 544.65 / FGSC A1164 / JCM 1740 / NRRL 181 / WB 181) (Aspergillus fischerianus)).